The following is a 309-amino-acid chain: Elongation factor Ts (309 aa).

An involved in Mg(2+) ion dislocation from EF-Tu region spans residues 80–83; that stretch reads TDFV.

Belongs to the EF-Ts family.

The protein resides in the cytoplasm. In terms of biological role, associates with the EF-Tu.GDP complex and induces the exchange of GDP to GTP. It remains bound to the aminoacyl-tRNA.EF-Tu.GTP complex up to the GTP hydrolysis stage on the ribosome. The protein is Elongation factor Ts of Rhodospirillum rubrum (strain ATCC 11170 / ATH 1.1.1 / DSM 467 / LMG 4362 / NCIMB 8255 / S1).